Reading from the N-terminus, the 549-residue chain is Glucose-6-phosphate isomerase (549 aa).

Residues Lys-80, Lys-228, and Lys-234 each carry the N6-acetyllysine modification. The Proton donor role is filled by Glu-355. Residues His-386 and Lys-514 contribute to the active site.

Belongs to the GPI family.

It is found in the cytoplasm. It carries out the reaction alpha-D-glucose 6-phosphate = beta-D-fructose 6-phosphate. It participates in carbohydrate biosynthesis; gluconeogenesis. The protein operates within carbohydrate degradation; glycolysis; D-glyceraldehyde 3-phosphate and glycerone phosphate from D-glucose: step 2/4. In terms of biological role, catalyzes the reversible isomerization of glucose-6-phosphate to fructose-6-phosphate. The polypeptide is Glucose-6-phosphate isomerase (Escherichia coli (strain SMS-3-5 / SECEC)).